Here is a 253-residue protein sequence, read N- to C-terminus: Imidazole glycerol phosphate synthase subunit HisF (253 aa).

Catalysis depends on residues D11 and D130.

This sequence belongs to the HisA/HisF family. Heterodimer of HisH and HisF.

It localises to the cytoplasm. It catalyses the reaction 5-[(5-phospho-1-deoxy-D-ribulos-1-ylimino)methylamino]-1-(5-phospho-beta-D-ribosyl)imidazole-4-carboxamide + L-glutamine = D-erythro-1-(imidazol-4-yl)glycerol 3-phosphate + 5-amino-1-(5-phospho-beta-D-ribosyl)imidazole-4-carboxamide + L-glutamate + H(+). Its pathway is amino-acid biosynthesis; L-histidine biosynthesis; L-histidine from 5-phospho-alpha-D-ribose 1-diphosphate: step 5/9. Its function is as follows. IGPS catalyzes the conversion of PRFAR and glutamine to IGP, AICAR and glutamate. The HisF subunit catalyzes the cyclization activity that produces IGP and AICAR from PRFAR using the ammonia provided by the HisH subunit. The sequence is that of Imidazole glycerol phosphate synthase subunit HisF from Ruegeria sp. (strain TM1040) (Silicibacter sp.).